Reading from the N-terminus, the 219-residue chain is 7-cyano-7-deazaguanine synthase 2 (219 aa).

Position 8-18 (8-18) interacts with ATP; the sequence is YSGGMDSFTAL. 4 residues coordinate Zn(2+): C185, C193, C196, and C199.

The protein belongs to the QueC family. Zn(2+) serves as cofactor.

It carries out the reaction 7-carboxy-7-deazaguanine + NH4(+) + ATP = 7-cyano-7-deazaguanine + ADP + phosphate + H2O + H(+). Its pathway is purine metabolism; 7-cyano-7-deazaguanine biosynthesis. Catalyzes the ATP-dependent conversion of 7-carboxy-7-deazaguanine (CDG) to 7-cyano-7-deazaguanine (preQ(0)). This is 7-cyano-7-deazaguanine synthase 2 from Colwellia psychrerythraea (strain 34H / ATCC BAA-681) (Vibrio psychroerythus).